Here is a 236-residue protein sequence, read N- to C-terminus: 15,16-dihydrobiliverdin:ferredoxin oxidoreductase (236 aa).

Belongs to the HY2 family.

The enzyme catalyses 15,16-dihydrobiliverdin + oxidized 2[4Fe-4S]-[ferredoxin] = biliverdin IXalpha + reduced 2[4Fe-4S]-[ferredoxin] + 2 H(+). Its function is as follows. Catalyzes the two-electron reduction of biliverdin IX-alpha at the C15 methine bridge. The protein is 15,16-dihydrobiliverdin:ferredoxin oxidoreductase of Prochlorococcus marinus (strain MIT 9215).